The chain runs to 677 residues: Methionine--tRNA ligase (677 aa).

Residues 15–25 carry the 'HIGH' region motif; that stretch reads PYANGSIHLGH. The Zn(2+) site is built by C146, C149, C159, and C162. The 'KMSKS' region signature appears at 333–337; it reads KMSKS. An ATP-binding site is contributed by K336. A tRNA-binding domain is found at 575–677; it reads DFAKIDLRVA…DGAKPGQQVK (103 aa).

It belongs to the class-I aminoacyl-tRNA synthetase family. MetG type 1 subfamily. As to quaternary structure, homodimer. Zn(2+) is required as a cofactor.

The protein resides in the cytoplasm. It catalyses the reaction tRNA(Met) + L-methionine + ATP = L-methionyl-tRNA(Met) + AMP + diphosphate. Its function is as follows. Is required not only for elongation of protein synthesis but also for the initiation of all mRNA translation through initiator tRNA(fMet) aminoacylation. This is Methionine--tRNA ligase from Salmonella choleraesuis (strain SC-B67).